A 193-amino-acid chain; its full sequence is dCTP deaminase (193 aa).

Residues 110–115, aspartate 128, 136–138, tyrosine 171, lysine 178, and glutamine 182 each bind dCTP; these read RSSLAR and VLE. Glutamate 138 (proton donor/acceptor) is an active-site residue. The segment at 169 to 193 is disordered; it reads RPYNRRQDAKYKDQQGAVASRIDKD.

The protein belongs to the dCTP deaminase family. In terms of assembly, homotrimer.

The catalysed reaction is dCTP + H2O + H(+) = dUTP + NH4(+). Its pathway is pyrimidine metabolism; dUMP biosynthesis; dUMP from dCTP (dUTP route): step 1/2. Its function is as follows. Catalyzes the deamination of dCTP to dUTP. The polypeptide is dCTP deaminase (Pectobacterium atrosepticum (strain SCRI 1043 / ATCC BAA-672) (Erwinia carotovora subsp. atroseptica)).